We begin with the raw amino-acid sequence, 129 residues long: MGKAKAERRLKDNEAQAVARTLRVSPQKLNLVAAAIRGKKVERALAELEFSRKRIAGAVKKTLESAIANAENNHDLDVDALVVAEAYVGKSIVMKRFHARGRGRASRIEKPFAHLTIVVREVQAAEEAA.

It belongs to the universal ribosomal protein uL22 family. Part of the 50S ribosomal subunit.

Functionally, this protein binds specifically to 23S rRNA; its binding is stimulated by other ribosomal proteins, e.g. L4, L17, and L20. It is important during the early stages of 50S assembly. It makes multiple contacts with different domains of the 23S rRNA in the assembled 50S subunit and ribosome. In terms of biological role, the globular domain of the protein is located near the polypeptide exit tunnel on the outside of the subunit, while an extended beta-hairpin is found that lines the wall of the exit tunnel in the center of the 70S ribosome. This chain is Large ribosomal subunit protein uL22, found in Rhizobium etli (strain ATCC 51251 / DSM 11541 / JCM 21823 / NBRC 15573 / CFN 42).